Reading from the N-terminus, the 520-residue chain is Glucose-1-phosphate adenylyltransferase small subunit, chloroplastic (520 aa).

A chloroplast-targeting transit peptide spans 1–71 (MATMAAIGSL…RTPSIVSPKA (71 aa)). The disordered stretch occupies residues 1-81 (MATMAAIGSL…VSDSQNSQTC (81 aa)). The segment covering 14–27 (SSSSNHTRRLSSSS) has biased composition (low complexity). Residues 28–51 (QRKTLSFSSSSLTGEKLNPTQEII) show a composition bias toward polar residues.

This sequence belongs to the bacterial/plant glucose-1-phosphate adenylyltransferase family. In terms of assembly, heterotetramer. Leaves.

The protein resides in the plastid. It localises to the chloroplast. The enzyme catalyses alpha-D-glucose 1-phosphate + ATP + H(+) = ADP-alpha-D-glucose + diphosphate. It participates in glycan biosynthesis; starch biosynthesis. With respect to regulation, activated by 3'phosphoglycerate, inhibited by orthophosphate. Allosteric regulation. In terms of biological role, this protein plays a role in synthesis of starch. It catalyzes the synthesis of the activated glycosyl donor, ADP-glucose from Glc-1-P and ATP. This Brassica napus (Rape) protein is Glucose-1-phosphate adenylyltransferase small subunit, chloroplastic (AGPS1).